Here is a 114-residue protein sequence, read N- to C-terminus: Iron-sulfur cluster insertion protein ErpA (114 aa).

The iron-sulfur cluster site is built by cysteine 42, cysteine 106, and cysteine 108.

It belongs to the HesB/IscA family. In terms of assembly, homodimer. It depends on iron-sulfur cluster as a cofactor.

Its function is as follows. Required for insertion of 4Fe-4S clusters for at least IspG. In Sodalis glossinidius (strain morsitans), this protein is Iron-sulfur cluster insertion protein ErpA.